Here is a 320-residue protein sequence, read N- to C-terminus: NAD kinase (320 aa).

Asp96 serves as the catalytic Proton acceptor. NAD(+) contacts are provided by residues 96 to 97 (DG), Arg101, 170 to 171 (NE), Asp200, and 211 to 216 (TAYAFS).

The protein belongs to the NAD kinase family. Requires a divalent metal cation as cofactor.

The protein resides in the cytoplasm. It catalyses the reaction NAD(+) + ATP = ADP + NADP(+) + H(+). In terms of biological role, involved in the regulation of the intracellular balance of NAD and NADP, and is a key enzyme in the biosynthesis of NADP. Catalyzes specifically the phosphorylation on 2'-hydroxyl of the adenosine moiety of NAD to yield NADP. The chain is NAD kinase from Rhodococcus jostii (strain RHA1).